Here is an 847-residue protein sequence, read N- to C-terminus: Guanine nucleotide exchange factor VAV3 (847 aa).

The 119-residue stretch at 1-119 (MEPWKQCAQW…ETLSRLSRTP (119 aa)) folds into the Calponin-homology (CH) domain. Residue Tyr141 is modified to Phosphotyrosine. In terms of domain architecture, DH spans 192–371 (IRSCCLAEIR…KDLAQYVNEV (180 aa)). Positions 400 to 502 (RPQGDGEIRI…WLEQFEMALS (103 aa)) constitute a PH domain. The segment at 513 to 562 (FHDFKMHTFTRVTSCRVCQMLLRGTFYQGYLCFKCGAKAHKECLGRVDNC) adopts a Phorbol-ester/DAG-type zinc-finger fold. The segment at 560–847 (DNCGRVNSVE…FPSTYVEEDE (288 aa)) is sufficient for interaction with ROS1. The SH3 1 domain maps to 592–660 (PGLPKMQVIR…PSDAVKPSPC (69 aa)). The 95-residue stretch at 672 to 766 (WYAGPMERLQ…TLDTTLQFPY (95 aa)) folds into the SH2 domain. The SH3 2 domain maps to 788–847 (KVLGIAIARYDFCARDMRELSLLKGDMVKIYTKMSANGWWRGEVNGRVGWFPSTYVEEDE).

In terms of assembly, interacts with the PH domain of APS. Interacts with ROS1; constitutive interaction that mediates VAV3 phosphorylation. Interacts (via SH2 domains) with the phosphorylated form of EPHA2. In terms of processing, phosphorylated. Phosphorylation can be mediated by ROS1. In osteoclasts, undergoes tyrosine phosphorylation in response to CSF1. In terms of tissue distribution, abundantly expressed in osteoclasts and mature osteoblasts. Also expressed in bone marrow macrophages (at protein level):.

Exchange factor for GTP-binding proteins RhoA, RhoG and, to a lesser extent, Rac1. Binds physically to the nucleotide-free states of those GTPases. Plays an important role in angiogenesis. Its recruitment by phosphorylated EPHA2 is critical for EFNA1-induced RAC1 GTPase activation and vascular endothelial cell migration and assembly. May be important for integrin-mediated signaling, at least in some cell types. In osteoclasts, along with SYK tyrosine kinase, required for signaling through integrin alpha-v/beta-1 (ITAGV-ITGB1), a crucial event for osteoclast proper cytoskeleton organization and function. This signaling pathway involves RAC1, but not RHO, activation. Necessary for proper wound healing. In the course of wound healing, required for the phagocytotic cup formation preceding macrophage phagocytosis of apoptotic neutrophils. Responsible for integrin beta-2-mediated macrophage adhesion and, to a lesser extent, contributes to beta-3-mediated adhesion. Does not affect integrin beta-1-mediated adhesion. This is Guanine nucleotide exchange factor VAV3 (Vav3) from Mus musculus (Mouse).